Here is a 107-residue protein sequence, read N- to C-terminus: MQNETDVIKNFDQELNIEWEDKVMEPRMYRVILHNDHYTTMDFVVQILMTIFHKPAAQATRIMLDVHRKGQGVCGVYTYDIASTKIAQVHFMARQNEYPLRCSMDEV.

This sequence belongs to the ClpS family. Binds to the N-terminal domain of the chaperone ClpA.

In terms of biological role, involved in the modulation of the specificity of the ClpAP-mediated ATP-dependent protein degradation. In Syntrophus aciditrophicus (strain SB), this protein is ATP-dependent Clp protease adapter protein ClpS.